Here is a 184-residue protein sequence, read N- to C-terminus: uncharacterized protein (184 aa).

Positions 1 to 20 are cleaved as a signal peptide; that stretch reads MTLRKILALTCLLLPMMASA.

It to H.influenzae HI_0045.

It is found in the periplasm. This is an uncharacterized protein from Escherichia coli (strain K12).